Consider the following 103-residue polypeptide: Omega toxin Ap5 (103 aa).

Residues 1 to 22 form the signal peptide; sequence MNTIQVILFAVVLVLTVTVGQA. A propeptide spanning residues 23–57 is cleaved from the precursor; it reads DEDSAETSLLRKLEEAEASMFGQYLEESKNSREKR. 3 disulfide bridges follow: Cys-58–Cys-73, Cys-65–Cys-78, and Cys-72–Cys-93.

This sequence belongs to the neurotoxin 14 (magi-1) family. 08 (Ltx-4) subfamily. In terms of tissue distribution, expressed by the venom duct.

It is found in the secreted. Functionally, shows a weak inhibition on the voltage-gated calcium channel Cav2.1/CACNA1A and some voltage-gated sodium channels (with 1 uM toxin tested: 22.08% inhibition on Cav2.1/CACNA1A, 6.6% on Nav1.1/SCN1A, 4.2% on Nav1.5, and 16% on Nav1.7). Shows a weak inhibition on the voltage-gated calcium channel Cav2.1/CACNA1A (28.06% at 1 uM). The polypeptide is Omega toxin Ap5 (Acanthoscurria paulensis (Brazilian giant black tarantula spider)).